The following is a 612-amino-acid chain: Glucoamylase (612 aa).

The signal sequence occupies residues Met1–Ala19. A propeptide spanning residues Val20–Arg25 is cleaved from the precursor. Residue Asn39 is glycosylated (N-linked (GlcNAc...) asparagine). Trp146 is a substrate binding site. Asp202 acts as the Proton acceptor in catalysis. The active-site Proton donor is the Glu205. Cystine bridges form between Cys236/Cys239, Cys248/Cys475, and Cys288/Cys296. Residues Cys506–Arg612 enclose the CBM20 domain.

It belongs to the glycosyl hydrolase 15 family.

It carries out the reaction Hydrolysis of terminal (1-&gt;4)-linked alpha-D-glucose residues successively from non-reducing ends of the chains with release of beta-D-glucose.. This Aspergillus oryzae (strain ATCC 42149 / RIB 40) (Yellow koji mold) protein is Glucoamylase (glaA).